The chain runs to 117 residues: Ribonuclease P protein component (117 aa).

Belongs to the RnpA family. As to quaternary structure, consists of a catalytic RNA component (M1 or rnpB) and a protein subunit.

It catalyses the reaction Endonucleolytic cleavage of RNA, removing 5'-extranucleotides from tRNA precursor.. Its function is as follows. RNaseP catalyzes the removal of the 5'-leader sequence from pre-tRNA to produce the mature 5'-terminus. It can also cleave other RNA substrates such as 4.5S RNA. The protein component plays an auxiliary but essential role in vivo by binding to the 5'-leader sequence and broadening the substrate specificity of the ribozyme. The protein is Ribonuclease P protein component of Desulforapulum autotrophicum (strain ATCC 43914 / DSM 3382 / VKM B-1955 / HRM2) (Desulfobacterium autotrophicum).